The primary structure comprises 621 residues: UvrABC system protein C (621 aa).

The GIY-YIG domain maps to 13–92 (EKPGVYLMKN…IKKYRPRYNI (80 aa)). Residues 204–239 (NEVINDLKIKMEKASSELKFEEAASFRDKLLAVEKI) enclose the UVR domain.

The protein belongs to the UvrC family. As to quaternary structure, interacts with UvrB in an incision complex.

It localises to the cytoplasm. Functionally, the UvrABC repair system catalyzes the recognition and processing of DNA lesions. UvrC both incises the 5' and 3' sides of the lesion. The N-terminal half is responsible for the 3' incision and the C-terminal half is responsible for the 5' incision. This is UvrABC system protein C from Clostridium novyi (strain NT).